Reading from the N-terminus, the 384-residue chain is Chaperone protein DnaJ (384 aa).

A J domain is found at D5–G70. A CR-type zinc finger spans residues G143–E221. C156, C159, C173, C176, C195, C198, C209, and C212 together coordinate Zn(2+). 4 CXXCXGXG motif repeats span residues C156–G163, C173–G180, C195–G202, and C209–G216.

It belongs to the DnaJ family. Homodimer. It depends on Zn(2+) as a cofactor.

Its subcellular location is the cytoplasm. Participates actively in the response to hyperosmotic and heat shock by preventing the aggregation of stress-denatured proteins and by disaggregating proteins, also in an autonomous, DnaK-independent fashion. Unfolded proteins bind initially to DnaJ; upon interaction with the DnaJ-bound protein, DnaK hydrolyzes its bound ATP, resulting in the formation of a stable complex. GrpE releases ADP from DnaK; ATP binding to DnaK triggers the release of the substrate protein, thus completing the reaction cycle. Several rounds of ATP-dependent interactions between DnaJ, DnaK and GrpE are required for fully efficient folding. Also involved, together with DnaK and GrpE, in the DNA replication of plasmids through activation of initiation proteins. The chain is Chaperone protein DnaJ from Rhodobacter capsulatus (Rhodopseudomonas capsulata).